The following is a 290-amino-acid chain: Taxis protein CheF1 (290 aa).

As to quaternary structure, interacts with chemotaxis (Che) proteins as well as flagella accessory (Fla) proteins.

Functionally, involved in taxis signal transduction. Essential for the ability to control the direction of flagellar rotation. May have a role between CheY and the flagellum. The chain is Taxis protein CheF1 (cheF1) from Halobacterium salinarum (strain ATCC 29341 / DSM 671 / R1).